Consider the following 385-residue polypeptide: MFEPVELNNNAIIKVIGIGGGGGNAVEYMVQEHIEGVEFFAINTDAQALRKIEVEQTIQIGSDITKGLGAGANPEIGRRAAEEDSDNLKSILKDADMVFIASGMGGGTGTGAAPIIAKISKKLGILTVAVVTKPFNFEGKKRMISAEQGVSELSKYVDSLIIIPNDKLIKVLSKGISLLDAFNTANNVLKGAVQGIAELITKPGLMNVDFADVRTVMSEMGYAMMGTGIASGDERAKEASKIAISSPLLEDINLSGAKGVLVNITSGLNMKLDEFETIGNTIRSFSSDNATVVIGTSLDTNMNDSLRVTIVATGIGTYNDIKHNNNTENHTSKHVPKNLENLQTKESPKYNNPKQHIYDTFNQQGITNKEMNYLDIPAFLRKKHK.

GTP is bound by residues 20–24 (GGGGN), 107–109 (GTG), E138, R142, and N186.

The protein belongs to the FtsZ family. As to quaternary structure, homodimer. Polymerizes to form a dynamic ring structure in a strictly GTP-dependent manner. Interacts directly with several other division proteins.

It is found in the cytoplasm. In terms of biological role, essential cell division protein that forms a contractile ring structure (Z ring) at the future cell division site. The regulation of the ring assembly controls the timing and the location of cell division. One of the functions of the FtsZ ring is to recruit other cell division proteins to the septum to produce a new cell wall between the dividing cells. Binds GTP and shows GTPase activity. This Buchnera aphidicola subsp. Baizongia pistaciae (strain Bp) protein is Cell division protein FtsZ.